Here is a 185-residue protein sequence, read N- to C-terminus: Ribosome-recycling factor (185 aa).

This sequence belongs to the RRF family.

Its subcellular location is the cytoplasm. Responsible for the release of ribosomes from messenger RNA at the termination of protein biosynthesis. May increase the efficiency of translation by recycling ribosomes from one round of translation to another. In Corynebacterium glutamicum (strain R), this protein is Ribosome-recycling factor.